We begin with the raw amino-acid sequence, 209 residues long: Protein-L-isoaspartate O-methyltransferase (209 aa).

Residue Ser55 is part of the active site.

The protein belongs to the methyltransferase superfamily. L-isoaspartyl/D-aspartyl protein methyltransferase family.

It is found in the cytoplasm. The enzyme catalyses [protein]-L-isoaspartate + S-adenosyl-L-methionine = [protein]-L-isoaspartate alpha-methyl ester + S-adenosyl-L-homocysteine. Functionally, catalyzes the methyl esterification of L-isoaspartyl residues in peptides and proteins that result from spontaneous decomposition of normal L-aspartyl and L-asparaginyl residues. It plays a role in the repair and/or degradation of damaged proteins. This is Protein-L-isoaspartate O-methyltransferase from Anaeromyxobacter dehalogenans (strain 2CP-C).